The sequence spans 178 residues: Protein GrpE (178 aa).

Residues 1-11 show a composition bias toward basic and acidic residues; it reads MADELSEKSVE. A disordered region spans residues 1-32; it reads MADELSEKSVEGTEEDGESAPAEGTTEGVPVD.

This sequence belongs to the GrpE family. Homodimer.

The protein resides in the cytoplasm. Functionally, participates actively in the response to hyperosmotic and heat shock by preventing the aggregation of stress-denatured proteins, in association with DnaK and GrpE. It is the nucleotide exchange factor for DnaK and may function as a thermosensor. Unfolded proteins bind initially to DnaJ; upon interaction with the DnaJ-bound protein, DnaK hydrolyzes its bound ATP, resulting in the formation of a stable complex. GrpE releases ADP from DnaK; ATP binding to DnaK triggers the release of the substrate protein, thus completing the reaction cycle. Several rounds of ATP-dependent interactions between DnaJ, DnaK and GrpE are required for fully efficient folding. In Methanothrix thermoacetophila (strain DSM 6194 / JCM 14653 / NBRC 101360 / PT) (Methanosaeta thermophila), this protein is Protein GrpE.